Reading from the N-terminus, the 1481-residue chain is Protein shortage in chiasmata 1 ortholog (1481 aa).

Disordered stretches follow at residues 479 to 498 (TDVH…EKEV) and 512 to 560 (KSKV…IQAS). The span at 513–531 (SKVEANPKNDQEPEARIMQ) shows a compositional bias: basic and acidic residues. Low complexity predominate over residues 543-560 (SSQVPSAESASSSQIQAS).

This sequence belongs to the XPF family. Highly divergent. As to quaternary structure, interacts with TEX11. Interacts with SPO16. As to expression, mainly expressed in adult testis.

The protein localises to the chromosome. Functionally, ATPase required during meiosis for the formation of crossover recombination intermediates. Binds DNA: preferentially binds to single-stranded DNA and DNA branched structures. Does not show nuclease activity in vitro, but shows ATPase activity, which is stimulated by the presence of single-stranded DNA. Plays a key role in homologous recombination and crossing-over in meiotic prophase I in male and female germ cells. Required for proper synaptonemal complex assembly and homologous chromosome pairing. Required for recruitment of TEX11 and MSH4 to recombination intermediates. The protein is Protein shortage in chiasmata 1 ortholog of Mus musculus (Mouse).